Reading from the N-terminus, the 187-residue chain is Elongation factor P (187 aa).

It belongs to the elongation factor P family.

It is found in the cytoplasm. It functions in the pathway protein biosynthesis; polypeptide chain elongation. Functionally, involved in peptide bond synthesis. Stimulates efficient translation and peptide-bond synthesis on native or reconstituted 70S ribosomes in vitro. Probably functions indirectly by altering the affinity of the ribosome for aminoacyl-tRNA, thus increasing their reactivity as acceptors for peptidyl transferase. This chain is Elongation factor P, found in Erythrobacter litoralis (strain HTCC2594).